The sequence spans 1163 residues: Type IV pilus biogenesis factor PilY1 (1163 aa).

Residues 1-30 (MKSALHQIGKTSLAAALSGAVLLSAQTTHA) form the signal peptide. The disordered stretch occupies residues 329–352 (SVGNADSTSRSLPDGKSYSSQTPY). The Ca(2+) site is built by aspartate 600, aspartate 602, asparagine 604, and aspartate 608. Residues 619 to 621 (RGD) form an integrin-binding motif RGD region. The Ca(2+) site is built by aspartate 851, asparagine 853, aspartate 855, valine 857, and aspartate 859. A disordered region spans residues 1138–1163 (SGECLTVNPGPNTRGRQNWRPIEGKN).

The protein belongs to the PilY1 family. Interacts (via C-terminal 532-1163) with host integrins alpha-V/beta-3 (ITGAV/ITGB3) and alpha-V/beta-5 (ITGAV/ITGB5).

The protein resides in the fimbrium. Its subcellular location is the membrane. It is found in the cytoplasm. The protein localises to the cytosol. In terms of biological role, involved in pilus assembly, twitching motility and adhesion to host cells. Primes type IV pili (T4P) assembly and is required for inclusion of minor pilins PilV, PilW and PilX to the surface pili. Stabilizes assembled pilus fibers likely by antagonizing retraction mediated by PilT. Calcium-binding and calcium release by PilY1 seem to be essential for twitching motility and for regulation of pilus retraction dynamics of PilT. Adhesin for human tissue specifically recognizing a host receptor localized or enriched on basolateral epithelial cell surfaces. Binds host integrins in an calcium-dependent manner in vitro and this interaction may be employed by the bacterium to mediate host epithelial cell binding in vivo. The sequence is that of Type IV pilus biogenesis factor PilY1 from Pseudomonas aeruginosa (strain PAK).